The primary structure comprises 181 residues: Isopentenyl-diphosphate Delta-isomerase (181 aa).

Mn(2+) is bound by residues His29 and His36. A Nudix hydrolase domain is found at 34 to 167 (PLHLAFSCYL…GWAISPWAAE (134 aa)). Cys71 is a catalytic residue. His73 is a Mn(2+) binding site. Position 91 (Glu91) interacts with Mg(2+). Residues Glu118 and Glu120 each contribute to the Mn(2+) site. Glu120 is a catalytic residue.

Belongs to the IPP isomerase type 1 family. It depends on Mg(2+) as a cofactor. Mn(2+) is required as a cofactor.

The protein localises to the cytoplasm. The enzyme catalyses isopentenyl diphosphate = dimethylallyl diphosphate. It functions in the pathway isoprenoid biosynthesis; dimethylallyl diphosphate biosynthesis; dimethylallyl diphosphate from isopentenyl diphosphate: step 1/1. Catalyzes the 1,3-allylic rearrangement of the homoallylic substrate isopentenyl (IPP) to its highly electrophilic allylic isomer, dimethylallyl diphosphate (DMAPP). In Mycolicibacterium vanbaalenii (strain DSM 7251 / JCM 13017 / BCRC 16820 / KCTC 9966 / NRRL B-24157 / PYR-1) (Mycobacterium vanbaalenii), this protein is Isopentenyl-diphosphate Delta-isomerase.